We begin with the raw amino-acid sequence, 432 residues long: DEAD-box ATP-dependent RNA helicase 56 (432 aa).

Residues 1–28 are a coiled coil; that stretch reads MAEAEVKDNEVYEEDLVDYEEEVENGTD. The short motif at 51–79 is the Q motif element; it reads SGFRDFLLKPELLRAIQDCGFEHPSEVQH. Residues 82 to 255 enclose the Helicase ATP-binding domain; that stretch reads IPQAILGMDV…KKFMQDPMEI (174 aa). Residue 95–102 participates in ATP binding; it reads AKSGMGKT. A DEAD box motif is present at residues 202–205; sequence DECD. A Helicase C-terminal domain is found at 283–428; that stretch reads KLNDLLDALD…ELPEQIDTST (146 aa).

Belongs to the DEAD box helicase family. DECD subfamily. Homodimer and heterodimer with AIP2. Interacts with API5.

Its subcellular location is the nucleus. It carries out the reaction ATP + H2O = ADP + phosphate + H(+). ATP-binding RNA helicase involved in pre-mRNA splicing. Required for the export of mRNA out of the nucleus. Required for tapetal programmed cell death (PCD) and degeneration during anther development. Forms dimer with AIP2 and binds the promoter region of the cysteine protease CP1. Can complement the yeast RNA helicase SUB2. Plants silencing AIP1 and AIP2 are male sterile. This Oryza sativa subsp. japonica (Rice) protein is DEAD-box ATP-dependent RNA helicase 56.